The chain runs to 424 residues: CinA-like protein (424 aa).

It belongs to the CinA family.

In Shewanella baltica (strain OS195), this protein is CinA-like protein.